Consider the following 352-residue polypeptide: tRNA pseudouridine synthase D (352 aa).

Aspartate 81 (nucleophile) is an active-site residue. A TRUD domain is found at 157–303; the sequence is GIPNYFGVQR…MEHERRILRL (147 aa).

Belongs to the pseudouridine synthase TruD family.

The enzyme catalyses uridine(13) in tRNA = pseudouridine(13) in tRNA. Responsible for synthesis of pseudouridine from uracil-13 in transfer RNAs. The sequence is that of tRNA pseudouridine synthase D from Pseudomonas syringae pv. tomato (strain ATCC BAA-871 / DC3000).